We begin with the raw amino-acid sequence, 102 residues long: Circadian clock protein KaiB3 (102 aa).

It belongs to the KaiB family. Purifies as a monomer and homotetramer. Interacts with KaiC1 and KaiC3.

A paralog of KaiB1, the major clock oscillator protein in this species. KaiB3 and KaiC3 may cross talk with the core oscillator. The monomer reduces the ATPase activity of KaiC3 by 55%, the homotetramer has no effect. Its function is as follows. A metamorphic protein which may reversibly switch between an inactive tetrameric fold and a rare thioredoxin-like monomeric fold (KaiB(fs)). The chain is Circadian clock protein KaiB3 from Synechocystis sp. (strain ATCC 27184 / PCC 6803 / Kazusa).